Reading from the N-terminus, the 248-residue chain is Ferric nitrobindin-like protein (248 aa).

Composition is skewed to polar residues over residues 1–25 and 32–43; these read MSSD…TNSG and QAVNLAAEQSKS. The segment at 1–49 is disordered; it reads MSSDKANNQSPDQGANTPAESTNSGPKLDGNQAVNLAAEQSKSTADKNL. The GXWXGXG motif lies at 82 to 88; sequence GVWRGQG. The tract at residues 118–147 is disordered; that stretch reads SRTWKINPPAEEGAEADGDEASAESAGEPE. The segment covering 129-139 has biased composition (acidic residues); that stretch reads EGAEADGDEAS.

It belongs to the nitrobindin family.

In Corynebacterium urealyticum (strain ATCC 43042 / DSM 7109), this protein is Ferric nitrobindin-like protein.